A 227-amino-acid polypeptide reads, in one-letter code: Cytidylate kinase (227 aa).

12–20 (GPSGAGKGT) contacts ATP.

The protein belongs to the cytidylate kinase family. Type 1 subfamily.

It localises to the cytoplasm. It catalyses the reaction CMP + ATP = CDP + ADP. It carries out the reaction dCMP + ATP = dCDP + ADP. The sequence is that of Cytidylate kinase from Xanthomonas axonopodis pv. citri (strain 306).